Consider the following 494-residue polypeptide: Glutamyl-tRNA(Gln) amidotransferase subunit A (494 aa).

Residues lysine 81 and serine 156 each act as charge relay system in the active site. Serine 180 serves as the catalytic Acyl-ester intermediate.

The protein belongs to the amidase family. GatA subfamily. Heterotrimer of A, B and C subunits.

It carries out the reaction L-glutamyl-tRNA(Gln) + L-glutamine + ATP + H2O = L-glutaminyl-tRNA(Gln) + L-glutamate + ADP + phosphate + H(+). In terms of biological role, allows the formation of correctly charged Gln-tRNA(Gln) through the transamidation of misacylated Glu-tRNA(Gln) in organisms which lack glutaminyl-tRNA synthetase. The reaction takes place in the presence of glutamine and ATP through an activated gamma-phospho-Glu-tRNA(Gln). The sequence is that of Glutamyl-tRNA(Gln) amidotransferase subunit A from Mycobacterium bovis (strain ATCC BAA-935 / AF2122/97).